The following is a 953-amino-acid chain: Glycine dehydrogenase (decarboxylating) (953 aa).

Lys-705 is subject to N6-(pyridoxal phosphate)lysine.

Belongs to the GcvP family. As to quaternary structure, the glycine cleavage system is composed of four proteins: P, T, L and H. The cofactor is pyridoxal 5'-phosphate.

It carries out the reaction N(6)-[(R)-lipoyl]-L-lysyl-[glycine-cleavage complex H protein] + glycine + H(+) = N(6)-[(R)-S(8)-aminomethyldihydrolipoyl]-L-lysyl-[glycine-cleavage complex H protein] + CO2. The glycine cleavage system catalyzes the degradation of glycine. The P protein binds the alpha-amino group of glycine through its pyridoxal phosphate cofactor; CO(2) is released and the remaining methylamine moiety is then transferred to the lipoamide cofactor of the H protein. The polypeptide is Glycine dehydrogenase (decarboxylating) (Sodalis glossinidius (strain morsitans)).